A 420-amino-acid chain; its full sequence is Pyrophosphate--fructose 6-phosphate 1-phosphotransferase (420 aa).

G13 lines the diphosphate pocket. Substrate-binding positions include T142–D144, M190–R192, E247, and Y297–R300. The Proton acceptor role is filled by D144.

The protein belongs to the phosphofructokinase type A (PFKA) family. PPi-dependent PFK group II subfamily. Clade 'B2' sub-subfamily. As to quaternary structure, homodimer. Mg(2+) serves as cofactor. It depends on Co(2+) as a cofactor. Requires Mn(2+) as cofactor.

It is found in the cytoplasm. It carries out the reaction beta-D-fructose 6-phosphate + diphosphate = beta-D-fructose 1,6-bisphosphate + phosphate + H(+). It participates in carbohydrate degradation; glycolysis; D-glyceraldehyde 3-phosphate and glycerone phosphate from D-glucose: step 3/4. With respect to regulation, non-allosteric. Catalyzes the phosphorylation of D-fructose 6-phosphate, the first committing step of glycolysis. Uses inorganic phosphate (PPi) as phosphoryl donor instead of ATP like common ATP-dependent phosphofructokinases (ATP-PFKs), which renders the reaction reversible, and can thus function both in glycolysis and gluconeogenesis. Consistently, PPi-PFK can replace the enzymes of both the forward (ATP-PFK) and reverse (fructose-bisphosphatase (FBPase)) reactions. The sequence is that of Pyrophosphate--fructose 6-phosphate 1-phosphotransferase from Methylococcus capsulatus (strain ATCC 33009 / NCIMB 11132 / Bath).